The sequence spans 126 residues: Large ribosomal subunit protein uL24 (126 aa).

Residues 1–23 form a disordered region; it reads MKFSRDVTSSRRKQRKAHFGAPS.

Belongs to the universal ribosomal protein uL24 family. In terms of assembly, component of the large ribosomal subunit (LSU). Mature yeast ribosomes consist of a small (40S) and a large (60S) subunit. The 40S small subunit contains 1 molecule of ribosomal RNA (18S rRNA) and at least 33 different proteins. The large 60S subunit contains 3 rRNA molecules (25S, 5.8S and 5S rRNA) and at least 46 different proteins.

The protein localises to the cytoplasm. The protein resides in the nucleus. Its subcellular location is the nucleolus. In terms of biological role, component of the ribosome, a large ribonucleoprotein complex responsible for the synthesis of proteins in the cell. The small ribosomal subunit (SSU) binds messenger RNAs (mRNAs) and translates the encoded message by selecting cognate aminoacyl-transfer RNA (tRNA) molecules. The large subunit (LSU) contains the ribosomal catalytic site termed the peptidyl transferase center (PTC), which catalyzes the formation of peptide bonds, thereby polymerizing the amino acids delivered by tRNAs into a polypeptide chain. The nascent polypeptides leave the ribosome through a tunnel in the LSU and interact with protein factors that function in enzymatic processing, targeting, and the membrane insertion of nascent chains at the exit of the ribosomal tunnel. This Schizosaccharomyces pombe (strain 972 / ATCC 24843) (Fission yeast) protein is Large ribosomal subunit protein uL24 (rpl26).